Consider the following 490-residue polypeptide: Cruciferin BnC1 (490 aa).

Positions 1–23 (MARLSSLLSFSLALLIFLHGSTA) are cleaved as a signal peptide. 2 disulfides stabilise this stretch: Cys30-Cys63 and Cys106-Cys307. 2 Cupin type-1 domains span residues 35-263 (LNAL…RTAQ) and 313-462 (DNLD…EEAR). Position 109 is a phosphothreonine (Thr109). Residues 113-164 (SSVFQPSGGSPSGEGQGQGQQGQGQGHQGQGQGQQGQQGQQGQQSQGQGFRD) are disordered. The span at 122–148 (SPSGEGQGQGQQGQGQGHQGQGQGQQG) shows a compositional bias: gly residues. Residues 149–161 (QQGQQGQQSQGQG) are compositionally biased toward low complexity. A Phosphotyrosine modification is found at Tyr330. A Phosphoserine modification is found at Ser332. Thr426 carries the post-translational modification Phosphothreonine.

Belongs to the 11S seed storage protein (globulins) family. In terms of assembly, hexamer; each subunit is composed of an acidic and a basic chain derived from a single precursor and linked by a disulfide bond.

In terms of biological role, this is a seed storage protein. The polypeptide is Cruciferin BnC1 (BnC1) (Brassica napus (Rape)).